An 88-amino-acid chain; its full sequence is Large ribosomal subunit protein eL31 (88 aa).

It belongs to the eukaryotic ribosomal protein eL31 family.

In Sulfurisphaera tokodaii (strain DSM 16993 / JCM 10545 / NBRC 100140 / 7) (Sulfolobus tokodaii), this protein is Large ribosomal subunit protein eL31 (rpl31e).